A 90-amino-acid chain; its full sequence is Small ribosomal subunit protein uS15c (90 aa).

The protein belongs to the universal ribosomal protein uS15 family. In terms of assembly, part of the 30S ribosomal subunit.

It is found in the plastid. The protein resides in the chloroplast. This Liriodendron tulipifera (Tuliptree) protein is Small ribosomal subunit protein uS15c (rps15).